Reading from the N-terminus, the 180-residue chain is Large ribosomal subunit protein uL5 (180 aa).

Belongs to the universal ribosomal protein uL5 family. As to quaternary structure, part of the 50S ribosomal subunit; part of the 5S rRNA/L5/L18/L25 subcomplex. Contacts the 5S rRNA and the P site tRNA. Forms a bridge to the 30S subunit in the 70S ribosome.

This is one of the proteins that bind and probably mediate the attachment of the 5S RNA into the large ribosomal subunit, where it forms part of the central protuberance. In the 70S ribosome it contacts protein S13 of the 30S subunit (bridge B1b), connecting the 2 subunits; this bridge is implicated in subunit movement. Contacts the P site tRNA; the 5S rRNA and some of its associated proteins might help stabilize positioning of ribosome-bound tRNAs. In Chlamydia pneumoniae (Chlamydophila pneumoniae), this protein is Large ribosomal subunit protein uL5.